A 326-amino-acid polypeptide reads, in one-letter code: Transcription cofactor vestigial-like protein 3 (326 aa).

The tract at residues serine 54–alanine 82 is disordered. Lysine 62 participates in a covalent cross-link: Glycyl lysine isopeptide (Lys-Gly) (interchain with G-Cter in SUMO2). The span at glutamate 64 to lysine 78 shows a compositional bias: acidic residues. A Glycyl lysine isopeptide (Lys-Gly) (interchain with G-Cter in SUMO2) cross-link involves residue lysine 129. Residues threonine 184 to glutamate 208 form a disordered region.

It belongs to the vestigial family.

The protein resides in the nucleus. Its function is as follows. May act as a specific coactivator for the mammalian TEFs. The sequence is that of Transcription cofactor vestigial-like protein 3 from Mus musculus (Mouse).